Consider the following 159-residue polypeptide: Transcriptional repressor NrdR (159 aa).

Residues 1–21 (MRCPKCQHNKSNVIDSRQAED) form a disordered region. A zinc finger lies at 3–34 (CPKCQHNKSNVIDSRQAEDGNTIRRRRECDAC). One can recognise an ATP-cone domain in the interval 49 to 139 (LLVVKKDGTR…VYRSFKDVDE (91 aa)).

The protein belongs to the NrdR family. It depends on Zn(2+) as a cofactor.

Negatively regulates transcription of bacterial ribonucleotide reductase nrd genes and operons by binding to NrdR-boxes. The polypeptide is Transcriptional repressor NrdR (Streptococcus thermophilus (strain CNRZ 1066)).